Consider the following 381-residue polypeptide: Protein-glutamate methylesterase/protein-glutamine glutaminase (381 aa).

A Response regulatory domain is found at 8-125; the sequence is QVLCIDDSAL…RDGMNEYADQ (118 aa). Asp-59 carries the post-translational modification 4-aspartylphosphate. The 193-residue stretch at 183-375 folds into the CheB-type methylesterase domain; that stretch reads FSSTEKLIIV…PHVLARLSAH (193 aa). Active-site residues include Ser-195, His-221, and Asp-317.

Belongs to the CheB family. Post-translationally, phosphorylated by CheA. Phosphorylation of the N-terminal regulatory domain activates the methylesterase activity.

The protein localises to the cytoplasm. The enzyme catalyses [protein]-L-glutamate 5-O-methyl ester + H2O = L-glutamyl-[protein] + methanol + H(+). It catalyses the reaction L-glutaminyl-[protein] + H2O = L-glutamyl-[protein] + NH4(+). Functionally, involved in chemotaxis. Part of a chemotaxis signal transduction system that modulates chemotaxis in response to various stimuli. Catalyzes the demethylation of specific methylglutamate residues introduced into the chemoreceptors (methyl-accepting chemotaxis proteins or MCP) by CheR. Also mediates the irreversible deamidation of specific glutamine residues to glutamic acid. This Ralstonia nicotianae (strain ATCC BAA-1114 / GMI1000) (Ralstonia solanacearum) protein is Protein-glutamate methylesterase/protein-glutamine glutaminase.